Consider the following 310-residue polypeptide: Cysteine synthase (310 aa).

Lysine 44 bears the N6-(pyridoxal phosphate)lysine mark. Pyridoxal 5'-phosphate-binding positions include asparagine 74, 179–183 (GTGGT), and serine 267.

Belongs to the cysteine synthase/cystathionine beta-synthase family. The cofactor is pyridoxal 5'-phosphate.

It catalyses the reaction O-acetyl-L-serine + hydrogen sulfide = L-cysteine + acetate. The protein operates within amino-acid biosynthesis; L-cysteine biosynthesis; L-cysteine from L-serine: step 2/2. The protein is Cysteine synthase (cysK) of Neisseria meningitidis serogroup B (strain ATCC BAA-335 / MC58).